The sequence spans 876 residues: Protein argonaute 17 (876 aa).

In terms of domain architecture, PAZ spans 246–338 (PVVDYVAQLL…LPLEVCKIAE (93 aa)). The Piwi domain maps to 514–834 (LLIVILPNNN…LSSRARCYIK (321 aa)). Positions 839–859 (GDSTSHTSLPSEEDSSAASET) are disordered.

Belongs to the argonaute family. Ago subfamily.

Probably involved in the RNA silencing pathway. May bind to short RNAs such as microRNAs (miRNAs) or short interfering RNAs (siRNAs), and represses the translation of mRNAs which are complementary to them. This Oryza sativa subsp. japonica (Rice) protein is Protein argonaute 17 (AGO17).